The primary structure comprises 504 residues: Hydroxyisobutyraldehyde dehydrogenase (504 aa).

The active-site Proton acceptor is the Glu260. Cys294 functions as the Nucleophile in the catalytic mechanism.

This sequence belongs to the aldehyde dehydrogenase family.

The protein resides in the cytoplasm. It carries out the reaction 2-hydroxy-2-methylpropanal + NAD(+) + H2O = 2-hydroxy-2-methylpropanoate + NADH + 2 H(+). Involved in the degradation of methyl tert-butyl ether (MTBE). Catalyzes the conversion of hydroxyisobutyraldehyde to hydroxyisobutyric acid (HIBA). This is Hydroxyisobutyraldehyde dehydrogenase from Mycolicibacterium austroafricanum (Mycobacterium austroafricanum).